We begin with the raw amino-acid sequence, 338 residues long: MIRVAINGYGRIGRSILRALYESGKRQQMQIVAINELAKPEAIIHLTQYDTTHGRFAHKVKLVDDHMLIGDDAIKILHEPDPTKLPWHEMDIDIVYEATGVLLDRQSCEAHIHAGAKQVLISHPSSADVDGTIVYGVNHDLLRAEHTVVSNASCTTNCIVPVIDVLDRHFGVKSGAITTIHSAMNDQQVIDAYHDDLRRTRAAGQSIIPVDTKLARGIERILPHMKDKFEAISVRVPTINVTAIDLSVTLEKTVDIATVNHVLESAANGRFNGILGYTDEPLVSCDFNHDPRSSIVDGTQTRVSAGQLVKLLLWCDNEWGFANRMLDTSLAMIAAKRG.

Position 11-12 (11-12) interacts with NAD(+); it reads RI. Substrate contacts are provided by residues 153–155, Arg199, 212–213, and Arg235; these read SCT and TK. Cys154 serves as the catalytic Nucleophile. Residue Asn317 participates in NAD(+) binding.

Belongs to the glyceraldehyde-3-phosphate dehydrogenase family. Epd subfamily. Homotetramer.

The protein localises to the cytoplasm. The catalysed reaction is D-erythrose 4-phosphate + NAD(+) + H2O = 4-phospho-D-erythronate + NADH + 2 H(+). Its pathway is cofactor biosynthesis; pyridoxine 5'-phosphate biosynthesis; pyridoxine 5'-phosphate from D-erythrose 4-phosphate: step 1/5. In terms of biological role, catalyzes the NAD-dependent conversion of D-erythrose 4-phosphate to 4-phosphoerythronate. In Shewanella baltica (strain OS223), this protein is D-erythrose-4-phosphate dehydrogenase.